The chain runs to 175 residues: MSEQKIEVVGKLGSTYGIRGWLRLYSSTEYPESIFDYQPWFLKIKGQWQQVELESWRYHNNDLIVKLKGTEDRETAQLLTNAEIGVDLAVFPELEEGDYYWHDLIGCQVVNLEGYAMGTVTEMMETGSNDVLVVKAGSKDAFGKQERLIPFLYEQVVKRVDLATKTITVDWDAGF.

One can recognise a PRC barrel domain in the interval 95–175 (EEGDYYWHDL…TITVDWDAGF (81 aa)).

The protein belongs to the RimM family. Binds ribosomal protein uS19.

The protein resides in the cytoplasm. Its function is as follows. An accessory protein needed during the final step in the assembly of 30S ribosomal subunit, possibly for assembly of the head region. Essential for efficient processing of 16S rRNA. May be needed both before and after RbfA during the maturation of 16S rRNA. It has affinity for free ribosomal 30S subunits but not for 70S ribosomes. The polypeptide is Ribosome maturation factor RimM (Glaesserella parasuis serovar 5 (strain SH0165) (Haemophilus parasuis)).